Consider the following 332-residue polypeptide: Fructose-1,6-bisphosphatase class 1 (332 aa).

Residues glutamate 89, aspartate 110, leucine 112, and aspartate 113 each contribute to the Mg(2+) site. Substrate-binding positions include 113-116 (DGSS), asparagine 206, tyrosine 239, 257-259 (YLY), and lysine 269. Residue glutamate 275 coordinates Mg(2+).

This sequence belongs to the FBPase class 1 family. Homotetramer. Mg(2+) serves as cofactor.

Its subcellular location is the cytoplasm. The enzyme catalyses beta-D-fructose 1,6-bisphosphate + H2O = beta-D-fructose 6-phosphate + phosphate. It functions in the pathway carbohydrate biosynthesis; gluconeogenesis. The sequence is that of Fructose-1,6-bisphosphatase class 1 from Klebsiella pneumoniae subsp. pneumoniae (strain ATCC 700721 / MGH 78578).